Consider the following 852-residue polypeptide: Zinc finger protein 484 (852 aa).

The KRAB domain occupies 8–78 (VSFKDVTVDF…DGEIPSQSRP (71 aa)). Lys-156 is covalently cross-linked (Glycyl lysine isopeptide (Lys-Gly) (interchain with G-Cter in SUMO2)). A C2H2-type 1; degenerate zinc finger spans residues 223–245 (CECNQCGKPLHHKQALIQQQKIH). A C2H2-type 2; degenerate zinc finger spans residues 279 to 301 (HECHECEAVFTQKSQLDGSQRVY). A C2H2-type 3; degenerate zinc finger spans residues 328-350 (YKCSDYGRAFIQKSDLFRCQRIH). Residues 356–378 (YEYSECEKNLPQNSNLNIHKKIH) form a C2H2-type 4; degenerate zinc finger. 15 consecutive C2H2-type zinc fingers follow at residues 384–406 (FECT…QKIH), 412–434 (YVCT…ERIH), 440–462 (YECS…QRIH), 468–490 (FICS…QKIH), 496–518 (YICT…QKIH), 524–546 (YKCS…QKCH), 552–574 (YECS…QRIH), 580–602 (YVCT…ERIH), 608–630 (YECS…QQIH), 636–658 (YRCA…QKIH), 664–686 (YKCS…QQSH), 692–714 (YECS…QRIH), 720–742 (YICN…RRIH), 748–770 (YECS…HRIH), and 776–798 (YICA…QKIH). Lys-816 is covalently cross-linked (Glycyl lysine isopeptide (Lys-Gly) (interchain with G-Cter in SUMO2)).

Belongs to the krueppel C2H2-type zinc-finger protein family.

Its subcellular location is the nucleus. Its function is as follows. May be involved in transcriptional regulation. In Homo sapiens (Human), this protein is Zinc finger protein 484 (ZNF484).